The following is a 375-amino-acid chain: Methylthioribose-1-phosphate isomerase (375 aa).

Substrate contacts are provided by residues 53–55 (RGA), Arg90, and Gln202. The active-site Proton donor is Asp243. Position 253 to 254 (253 to 254 (NK)) interacts with substrate.

This sequence belongs to the eIF-2B alpha/beta/delta subunits family. MtnA subfamily.

It catalyses the reaction 5-(methylsulfanyl)-alpha-D-ribose 1-phosphate = 5-(methylsulfanyl)-D-ribulose 1-phosphate. The protein operates within amino-acid biosynthesis; L-methionine biosynthesis via salvage pathway; L-methionine from S-methyl-5-thio-alpha-D-ribose 1-phosphate: step 1/6. Catalyzes the interconversion of methylthioribose-1-phosphate (MTR-1-P) into methylthioribulose-1-phosphate (MTRu-1-P). This chain is Methylthioribose-1-phosphate isomerase, found in Rhodospirillum centenum (strain ATCC 51521 / SW).